A 610-amino-acid polypeptide reads, in one-letter code: E-selectin (610 aa).

Positions 1-21 are cleaved as a signal peptide; the sequence is MIASQFLSALTLVLLIKESGA. Positions 22–138 constitute a C-type lectin domain; that stretch reads WSYSASTTNM…CNKKKLALCY (117 aa). Over 22–555 the chain is Extracellular; sequence WSYSASTTNM…CEATAKSNIP (534 aa). Asparagine 30 is a glycosylation site (N-linked (GlcNAc...) asparagine). Intrachain disulfides connect cysteine 40/cysteine 137, cysteine 110/cysteine 129, cysteine 142/cysteine 153, cysteine 147/cysteine 162, cysteine 164/cysteine 173, cysteine 179/cysteine 223, cysteine 192/cysteine 205, cysteine 209/cysteine 236, cysteine 241/cysteine 285, cysteine 254/cysteine 267, cysteine 271/cysteine 298, cysteine 303/cysteine 348, cysteine 334/cysteine 361, cysteine 366/cysteine 411, cysteine 397/cysteine 424, cysteine 429/cysteine 474, cysteine 460/cysteine 487, cysteine 492/cysteine 533, and cysteine 519/cysteine 546. The Ca(2+) site is built by glutamate 101, asparagine 103, and glutamate 108. Residues 101–108, 112–117, and 125–127 each bind a carbohydrate; these read EPNNKQNE, EIYIKR, and NDE. Ca(2+)-binding residues include asparagine 125 and aspartate 126. Residues 139–174 form the EGF-like domain; it reads TAACTHTSCSGHGECVETINNYTCQCHPGFTGLRCE. An N-linked (GlcNAc...) asparagine glycan is attached at asparagine 159. Sushi domains follow at residues 177 to 238, 239 to 300, 314 to 363, 365 to 426, 428 to 489, and 490 to 548; these read VTCQ…ACHV, VECD…TCKA, VNCS…VCKA, QCKA…TCEA, RCDA…SCQV, and VQCA…TCEA. N-linked (GlcNAc...) asparagine glycans are attached at residues asparagine 198 and asparagine 202. A glycan (N-linked (GlcNAc...) asparagine) is linked at asparagine 264. 3 N-linked (GlcNAc...) asparagine glycosylation sites follow: asparagine 315, asparagine 327, and asparagine 331. Asparagine 526 carries N-linked (GlcNAc...) asparagine glycosylation. A helical transmembrane segment spans residues 556–577; that stretch reads LTVGLSAAGTSLLTLASFLFWL. The Cytoplasmic segment spans residues 578–610; sequence LKRLRRKAKKFVPASSYQSLQSDGSYQMPSESA.

The protein belongs to the selectin/LECAM family. As to quaternary structure, interacts with SELPLG/PSGL1 and PODXL2 through the sialyl Lewis X epitope. SELPLG sulfation appears not to be required for this interaction.

The protein resides in the cell membrane. Functionally, cell-surface glycoprotein having a role in immunoadhesion. Mediates in the adhesion of blood neutrophils in cytokine-activated endothelium through interaction with SELPLG/PSGL1. May have a role in capillary morphogenesis. The chain is E-selectin (SELE) from Equus caballus (Horse).